Reading from the N-terminus, the 134-residue chain is Putative pre-16S rRNA nuclease (134 aa).

It belongs to the YqgF nuclease family.

The protein resides in the cytoplasm. Could be a nuclease involved in processing of the 5'-end of pre-16S rRNA. This chain is Putative pre-16S rRNA nuclease, found in Helicobacter pylori (strain ATCC 700392 / 26695) (Campylobacter pylori).